The following is a 196-amino-acid chain: DnaA initiator-associating protein DiaA (196 aa).

Residues 34 to 196 (LVQSLLNGNK…DNTLFPHQDD (163 aa)) enclose the SIS domain.

It belongs to the SIS family. DiaA subfamily. In terms of assembly, homotetramer; dimer of dimers.

Functionally, required for the timely initiation of chromosomal replication via direct interactions with the DnaA initiator protein. The polypeptide is DnaA initiator-associating protein DiaA (Cronobacter sakazakii (strain ATCC BAA-894) (Enterobacter sakazakii)).